Reading from the N-terminus, the 1021-residue chain is Translation initiation factor IF-2 (1021 aa).

Residues 50–422 (AFPAEGGSAS…RMGAMVPRGN (373 aa)) are disordered. Over residues 57-71 (SASGGRPGGRPGPGN) the composition is skewed to gly residues. Positions 75 to 95 (PAPPRPGLAPRPGPRPVPGRP) are enriched in pro residues. The span at 96–112 (GPAARPGGPAAPSAPAA) shows a compositional bias: low complexity. Residues 113-129 (PSAPAPGAPAASPPASQ) show a composition bias toward pro residues. Composition is skewed to low complexity over residues 130–159 (PRPIAASAAAPPPAATSIPPVSSPAAASGP), 167–178 (GGPAAPGRARPG), and 187–196 (SAPSAPSAGG). Over residues 198–208 (RPGPRPGPRPS) the composition is skewed to pro residues. A compositionally biased stretch (low complexity) spans 219–233 (SAGPRQSAGQSGSGP). 2 stretches are compositionally biased toward pro residues: residues 234-254 (ASPPRPGAPRPGPRPGGPRPG) and 262-273 (RPSPGSMPPRPG). 2 stretches are compositionally biased toward gly residues: residues 275-291 (RPGGSGGMPPRPGGSGG) and 306-389 (GAPG…GGRG). The span at 390 to 401 (RPGRQRKSKRAK) shows a compositional bias: basic residues. A tr-type G domain is found at 514-686 (IRPPVVTVMG…IILTADASLD (173 aa)). The G1 stretch occupies residues 523-530 (GHVDHGKT). Residue 523–530 (GHVDHGKT) coordinates GTP. The G2 stretch occupies residues 548 to 552 (GITQH). Residues 573 to 576 (DTPG) are G3. GTP is bound by residues 573–577 (DTPGH) and 627–630 (NKVD). The segment at 627–630 (NKVD) is G4. Positions 663–665 (SAR) are G5.

It belongs to the TRAFAC class translation factor GTPase superfamily. Classic translation factor GTPase family. IF-2 subfamily.

The protein localises to the cytoplasm. Its function is as follows. One of the essential components for the initiation of protein synthesis. Protects formylmethionyl-tRNA from spontaneous hydrolysis and promotes its binding to the 30S ribosomal subunits. Also involved in the hydrolysis of GTP during the formation of the 70S ribosomal complex. The chain is Translation initiation factor IF-2 from Frankia alni (strain DSM 45986 / CECT 9034 / ACN14a).